We begin with the raw amino-acid sequence, 509 residues long: ATP synthase subunit alpha (509 aa).

169–176 (GDRQTGKT) contacts ATP.

The protein belongs to the ATPase alpha/beta chains family. As to quaternary structure, F-type ATPases have 2 components, CF(1) - the catalytic core - and CF(0) - the membrane proton channel. CF(1) has five subunits: alpha(3), beta(3), gamma(1), delta(1), epsilon(1). CF(0) has three main subunits: a(1), b(2) and c(9-12). The alpha and beta chains form an alternating ring which encloses part of the gamma chain. CF(1) is attached to CF(0) by a central stalk formed by the gamma and epsilon chains, while a peripheral stalk is formed by the delta and b chains.

It localises to the cell inner membrane. It carries out the reaction ATP + H2O + 4 H(+)(in) = ADP + phosphate + 5 H(+)(out). Functionally, produces ATP from ADP in the presence of a proton gradient across the membrane. The alpha chain is a regulatory subunit. This is ATP synthase subunit alpha from Brucella canis (strain ATCC 23365 / NCTC 10854 / RM-666).